We begin with the raw amino-acid sequence, 76 residues long: Alpha/kappa-conotoxin-like pl14.1 (76 aa).

The signal sequence occupies residues Met-1–Pro-27. The propeptide occupies Ala-28–Arg-39. 2 cysteine pairs are disulfide-bonded: Cys-46–Cys-61 and Cys-50–Cys-63. Position 64 is an asparagine amide (Asn-64). A propeptide spanning residues Gly-65–Val-76 is cleaved from the precursor.

It belongs to the conotoxin J superfamily. As to expression, expressed by the venom duct.

It is found in the secreted. In terms of biological role, highly inhibits both nicotinic acetylcholine receptors (neuronal (alpha-3/beta-4) and muscular (alpha-1/beta-1/epsilon/delta) subtypes) and the voltage-gated potassium channel Kv1.6/KCNA6 subtype. In Conus planorbis (Planorbis cone), this protein is Alpha/kappa-conotoxin-like pl14.1.